A 246-amino-acid polypeptide reads, in one-letter code: Ubiquinone biosynthesis O-methyltransferase (246 aa).

Positions 40, 70, 91, and 135 each coordinate S-adenosyl-L-methionine.

The protein belongs to the methyltransferase superfamily. UbiG/COQ3 family.

The enzyme catalyses a 3-demethylubiquinol + S-adenosyl-L-methionine = a ubiquinol + S-adenosyl-L-homocysteine + H(+). The catalysed reaction is a 3-(all-trans-polyprenyl)benzene-1,2-diol + S-adenosyl-L-methionine = a 2-methoxy-6-(all-trans-polyprenyl)phenol + S-adenosyl-L-homocysteine + H(+). The protein operates within cofactor biosynthesis; ubiquinone biosynthesis. O-methyltransferase that catalyzes the 2 O-methylation steps in the ubiquinone biosynthetic pathway. This is Ubiquinone biosynthesis O-methyltransferase from Colwellia psychrerythraea (strain 34H / ATCC BAA-681) (Vibrio psychroerythus).